Here is a 64-residue protein sequence, read N- to C-terminus: Prokaryotic ubiquitin-like protein Pup (64 aa).

Positions 1–10 (MNQNGSQIHS) are enriched in polar residues. A disordered region spans residues 1–32 (MNQNGSQIHSDGNGHSDDTDTPGVSAGQVSVN). The tract at residues 20 to 58 (DTPGVSAGQVSVNTAGVDDLLDEIDGLLESNAEEFVRSY) is ARC ATPase binding. Position 64 is a deamidated glutamine (Q64). Q64 participates in a covalent cross-link: Isoglutamyl lysine isopeptide (Gln-Lys) (interchain with K-? in acceptor proteins).

This sequence belongs to the prokaryotic ubiquitin-like protein family. As to quaternary structure, strongly interacts with the proteasome-associated ATPase ARC through a hydrophobic interface; the interacting region of Pup lies in its C-terminal half. There is one Pup binding site per ARC hexamer ring. Is modified by deamidation of its C-terminal glutamine to glutamate by the deamidase Dop, a prerequisite to the subsequent pupylation process.

The protein operates within protein degradation; proteasomal Pup-dependent pathway. In terms of biological role, protein modifier that is covalently attached to lysine residues of substrate proteins, thereby targeting them for proteasomal degradation. The tagging system is termed pupylation. The sequence is that of Prokaryotic ubiquitin-like protein Pup from Corynebacterium diphtheriae (strain ATCC 700971 / NCTC 13129 / Biotype gravis).